The sequence spans 770 residues: uncharacterized protein (770 aa).

The segment at 736–770 (GSGQPGQSPANVGDDPNRMVQSSASQTQIGHVFNN) is disordered. Positions 754–770 (MVQSSASQTQIGHVFNN) are enriched in polar residues.

This is an uncharacterized protein from Caenorhabditis elegans.